The sequence spans 816 residues: Protein kinase C-binding protein NELL2 (816 aa).

A signal peptide spans 1–21; the sequence is MESRVLLRTFCLIFGLGAVWG. 4 N-linked (GlcNAc...) asparagine glycosylation sites follow: N53, N225, N293, and N298. Residues 64-228 form the Laminin G-like domain; the sequence is PRSVKASTAT…AQCPDLNRTC (165 aa). The region spanning 272–331 is the VWFC 1 domain; that stretch reads RTCTMKGTTYREFESWIDGCKNCTCLNGTIQCETLICPNPDCPLNSALAYVDGKCCKECK. The 43-residue stretch at 397-439 folds into the EGF-like 1 domain; sequence GYDFCSERHNCMENSVCRNLNDRAVCSCRDGFRALREDNAYCE. 3 cysteine pairs are disulfide-bonded: C401-C413, C407-C422, and C424-C438. Residues D440, I441, and E443 each coordinate Ca(2+). The region spanning 440 to 481 is the EGF-like 2; calcium-binding domain; it reads DIDECAEGRHYCRENTMCVNTPGSFMCICKTGYIRIDDYSCT. Intrachain disulfides connect C444–C457, C451–C466, C468–C480, C486–C499, C493–C508, C510–C521, C525–C535, C529–C541, and C543–C552. Residues N459, T460, and S463 each contribute to the Ca(2+) site. The EGF-like 3; calcium-binding domain occupies 482-522; the sequence is EHDECITNQHNCDENALCFNTVGGHNCVCKPGYTGNGTTCK. A glycan (N-linked (GlcNAc...) asparagine) is linked at N517. The EGF-like 4 domain occupies 523 to 553; that stretch reads AFCKDGCRNGGACIAANVCACPQGFTGPSCE. The O-linked (GlcNAc...) threonine glycan is linked to T548. Residues D555, I556, and E558 each coordinate Ca(2+). The EGF-like 5; calcium-binding domain occupies 555–601; that stretch reads DIDECSDGFVQCDSRANCINLPGWYHCECRDGYHDNGMFSPSGESCE. 3 cysteine pairs are disulfide-bonded: C559–C572, C566–C581, and C583–C600. The Ca(2+) site is built by N574, L575, and W578. Ca(2+) is bound by residues D602, I603, and E605. One can recognise an EGF-like 6; calcium-binding domain in the interval 602 to 637; sequence DIDECGTGRHSCANDTICFNLDGGYDCRCPHGKNCT. Cystine bridges form between C606–C619, C613–C628, and C630–C636. An N-linked (GlcNAc...) asparagine glycan is attached at N615. The Ca(2+) site is built by N621, L622, and G625. N635 carries N-linked (GlcNAc...) asparagine glycosylation. VWFC domains are found at residues 638–693 and 698–756; these read GDCI…PECD and SQCL…PRCV.

In terms of assembly, homotrimer. Binds to PRKCB. Interacts with NICOL1; this interaction triggers epididymal differentiation.

The protein localises to the secreted. Plays multiple roles in neural tissues, regulates neuronal proliferation, survival, differentiation, polarization, as well as axon guidance and synaptic functions. Plays an important role in axon development during neuronal differentiation through the MAPK intracellular signaling pathway. Via binding to its receptor ROBO3, plays a role in axon guidance, functions as a repulsive guidance cue for commissural axons, helping to steer them across the spinal cord midline. Required for neuron survival through the modulation of MAPK signaling pathways too. Involved in the regulation of hypothalamic GNRH secretion and the control of puberty. Functionally, testicular luminal protein that signals through a ROS1-pathway to regulate the epididymal initial segment (IS) maturation, sperm maturation and male fertility. The sequence is that of Protein kinase C-binding protein NELL2 (NELL2) from Pongo abelii (Sumatran orangutan).